Consider the following 136-residue polypeptide: Membrane-bound negative regulator YvrL (136 aa).

The next 4 membrane-spanning stretches (helical) occupy residues 18-38, 46-66, 83-103, and 106-126; these read LLAA…LFSL, AAHV…FEPF, LFIL…AHTT, and LISD…VFLI.

The protein localises to the cell membrane. Functionally, negatively regulates RNA polymerase sigma factor SigO-dependent transcription. Prevents the expression or secretion of OxdC under nonstress conditions. May act as an anti-sigma factor. The chain is Membrane-bound negative regulator YvrL (yvrL) from Bacillus subtilis (strain 168).